Reading from the N-terminus, the 396-residue chain is Putative T-box protein 39 (396 aa).

The segment at residues 11 to 192 is a DNA-binding region (T-box); the sequence is MAEEDRWKQW…KNSTYGNRLD (182 aa). Positions 185–215 are disordered; it reads STYGNRLDGGNKRKNTDSSEERTSKRSKNET. Positions 193-215 are enriched in basic and acidic residues; it reads GGNKRKNTDSSEERTSKRSKNET.

The protein resides in the nucleus. This Caenorhabditis elegans protein is Putative T-box protein 39 (tbx-39).